A 1219-amino-acid chain; its full sequence is Type IV pilus biogenesis factor PilY1 homolog PD_0502 (1219 aa).

An N-terminal signal peptide occupies residues 1 to 35 (MVGMSRIILNNLFFFRCVVAVFSAHSLVISGAVHA). Residues 212-234 (GLSTDPLNTEGQPYDPSRHPLNS) are disordered. Residues Gln958, Asn960, Ile962, and Asp964 each contribute to the Ca(2+) site.

This sequence belongs to the PilY1 family.

It is found in the fimbrium. Functionally, one of the three PilY1 homologs of X.fastidiosa, which are involved in bacterial twitching motility as component of the filamentous type IV pili (T4P). This is Type IV pilus biogenesis factor PilY1 homolog PD_0502 from Xylella fastidiosa (strain Temecula1 / ATCC 700964).